Here is a 467-residue protein sequence, read N- to C-terminus: Cysteine--tRNA ligase (467 aa).

Cys-28 provides a ligand contact to Zn(2+). The short motif at 30-40 (MTVYDYCHLGH) is the 'HIGH' region element. Residues Cys-209, His-234, and Glu-238 each coordinate Zn(2+). A 'KMSKS' region motif is present at residues 266-270 (KMSKS). Position 269 (Lys-269) interacts with ATP.

The protein belongs to the class-I aminoacyl-tRNA synthetase family. In terms of assembly, monomer. It depends on Zn(2+) as a cofactor.

Its subcellular location is the cytoplasm. It carries out the reaction tRNA(Cys) + L-cysteine + ATP = L-cysteinyl-tRNA(Cys) + AMP + diphosphate. This Hahella chejuensis (strain KCTC 2396) protein is Cysteine--tRNA ligase.